Reading from the N-terminus, the 420-residue chain is RING finger protein 39 (420 aa).

The RING-type zinc-finger motif lies at cysteine 88 to glycine 135. Positions aspartate 210 to serine 420 constitute a B30.2/SPRY domain.

Expressed in testis.

The protein localises to the cytoplasm. The catalysed reaction is S-ubiquitinyl-[E2 ubiquitin-conjugating enzyme]-L-cysteine + [acceptor protein]-L-lysine = [E2 ubiquitin-conjugating enzyme]-L-cysteine + N(6)-ubiquitinyl-[acceptor protein]-L-lysine.. Its pathway is protein modification; protein ubiquitination. Plays an inhibitory role in anti-RNA viral innate immunity by targeting the adapter DDX3X and promoting its 'Lys-48'-linked polyubiquitination. Alternatively, enhances the cGAS-STING pathway activation by promoting 'Lys-63'-linked ubiquitination of STING1, facilitating the STING1-TBK1 complex formation and STING1 activation. In terms of biological role, (Microbial infection) Plays a positive role in human immunodeficiency virus (HIV-1) replication. This Homo sapiens (Human) protein is RING finger protein 39 (RNF39).